Consider the following 143-residue polypeptide: Putative transmembrane protein ORF32 (143 aa).

Transmembrane regions (helical) follow at residues 20-42 (GISG…SFTL) and 52-74 (WPLI…EGGV).

It localises to the host membrane. This chain is Putative transmembrane protein ORF32, found in Haloarcula hispanica (His1V).